A 433-amino-acid polypeptide reads, in one-letter code: Enolase (433 aa).

Gln167 is a (2R)-2-phosphoglycerate binding site. Glu209 (proton donor) is an active-site residue. Positions 246, 287, and 314 each coordinate Mg(2+). Lys339, Arg368, Ser369, and Lys390 together coordinate (2R)-2-phosphoglycerate. The active-site Proton acceptor is Lys339.

This sequence belongs to the enolase family. The cofactor is Mg(2+).

The protein localises to the cytoplasm. The protein resides in the secreted. It localises to the cell surface. The catalysed reaction is (2R)-2-phosphoglycerate = phosphoenolpyruvate + H2O. The protein operates within carbohydrate degradation; glycolysis; pyruvate from D-glyceraldehyde 3-phosphate: step 4/5. Catalyzes the reversible conversion of 2-phosphoglycerate (2-PG) into phosphoenolpyruvate (PEP). It is essential for the degradation of carbohydrates via glycolysis. The chain is Enolase from Prochlorococcus marinus (strain NATL2A).